Consider the following 66-residue polypeptide: Large ribosomal subunit protein bL28 (66 aa).

The disordered stretch occupies residues 1–26 (MAKDAITGARTRFGNQRSHALNSSRR). Positions 13-25 (FGNQRSHALNSSR) are enriched in polar residues.

It belongs to the bacterial ribosomal protein bL28 family.

This Leuconostoc mesenteroides subsp. mesenteroides (strain ATCC 8293 / DSM 20343 / BCRC 11652 / CCM 1803 / JCM 6124 / NCDO 523 / NBRC 100496 / NCIMB 8023 / NCTC 12954 / NRRL B-1118 / 37Y) protein is Large ribosomal subunit protein bL28.